The sequence spans 711 residues: MSDYSTGGPPPGPPPPAGGGGGAGGAGGGPPPGPPGAGDRGGGGPGGGGPGGGSAGGPSQPPGGGGPGIRKDAFADAVQRARQIAAKIGGDAATTVNNSTPDFGFGGQKRQLEDGDQPESKKLASQGDSISSQLGPIHPPPRTSMTEEYRVPDGMVGLIIGRGGEQINKIQQDSGCKVQISPDSGGLPERSVSLTGAPESVQKAKMMLDDIVSRGRGGPPGQFHDNANGGQNGTVQEIMIPAGKAGLVIGKGGETIKQLQERAGVKMILIQDGSQNTNVDKPLRIIGDPYKVQQACEMVMDILRERDQGGFGDRNEYGSRIGGGIDVPVPRHSVGVVIGRSGEMIKKIQNDAGVRIQFKQDDGTGPEKIAHIMGPPDRCEHAARIINDLLQSLRSGPPGPPGGPGMPPGGRGRGRGQGNWGPPGGEMTFSIPTHKCGLVIGRGGENVKAINQQTGAFVEISRQLPPNGDPNFKLFIIRGSPQQIDHAKQLIEEKIEGPLCPVGPGPGGPGPAGPMGPFNPGPFNQGPPGAPPHAGGPPPHQYPPQGWGNTYPQWQPPAPHDPSKAAAAAADPNAAWAAYYSHYYQQPPGPVPGPAPAPAAPPAQGEPPQPPPTGQSDYTKAWEEYYKKIGQQPQQPGAPPQQDYTKAWEEYYKKQAQVATGGGPGAPPGSQPDYSAAWAEYYRQQAAYYGQTPGPGGPQPPPTQQGQQQAQ.

Residues 1–147 form a disordered region; it reads MSDYSTGGPP…HPPPRTSMTE (147 aa). S2 is modified (N-acetylserine). The segment covering 8–17 has biased composition (pro residues); it reads GPPPGPPPPA. Composition is skewed to gly residues over residues 18–28 and 36–68; these read GGGGGAGGAGG and GAGD…GGPG. Residue R40 is modified to Omega-N-methylarginine. The residue at position 87 (K87) is an N6-acetyllysine. Residue S99 is modified to Phosphoserine. T100 carries the phosphothreonine modification. Residues 110 to 122 show a composition bias toward basic and acidic residues; it reads RQLEDGDQPESKK. A Glycyl lysine isopeptide (Lys-Gly) (interchain with G-Cter in SUMO1); alternate cross-link involves residue K121. Residue K121 forms a Glycyl lysine isopeptide (Lys-Gly) (interchain with G-Cter in SUMO2); alternate linkage. Phosphoserine is present on residues S125, S129, S131, S181, S184, S193, and S274. 3 KH domains span residues 144-208, 233-299, and 322-386; these read SMTE…KMML, GTVQ…CEMV, and GGGI…ARII. Residues 392-429 are disordered; it reads SLRSGPPGPPGGPGMPPGGRGRGRGQGNWGPPGGEMTF. The span at 397-407 shows a compositional bias: pro residues; sequence PPGPPGGPGMP. Positions 408-424 are enriched in gly residues; sequence PGGRGRGRGQGNWGPPG. Omega-N-methylarginine is present on residues R411, R413, R415, and R442. One can recognise a KH 4 domain in the interval 424-491; that stretch reads GGEMTFSIPT…QQIDHAKQLI (68 aa). S480 carries the post-translational modification Phosphoserine. A disordered region spans residues 497–569; it reads GPLCPVGPGP…HDPSKAAAAA (73 aa). Pro residues-rich tracts occupy residues 501–520 and 528–542; these read PVGP…PFNP and PGAP…PHQY. Residues 571 to 582 form repeat 1; that stretch reads DPNAAWAAYYSH. Residues 571-684 are 4 X 12 AA imperfect repeats; sequence DPNAAWAAYY…SAAWAEYYRQ (114 aa). A disordered region spans residues 583 to 711; sequence YYQQPPGPVP…PTQQGQQQAQ (129 aa). Positions 587 to 613 are enriched in pro residues; that stretch reads PPGPVPGPAPAPAAPPAQGEPPQPPPT. A run of 3 repeats spans residues 617–628, 643–654, and 673–684.

The protein belongs to the KHSRP family. As to quaternary structure, part of a ternary complex containing FUBP2, PTBP1, PTBP2 and HNRPH1. Interacts with PARN. Interacts with PQBP1. Phosphorylation at Ser-193 leads to the unfolding of the unstable KH domain 1, creating a site for 14-3-3 YWHAZ binding, which promotes nuclear localization and impairs the RNA degradation function. Detected in neural and non-neural cell lines.

Its subcellular location is the nucleus. It is found in the cytoplasm. Binds to the dendritic targeting element and may play a role in mRNA trafficking. Part of a ternary complex that binds to the downstream control sequence (DCS) of the pre-mRNA. Mediates exon inclusion in transcripts that are subject to tissue-specific alternative splicing. May interact with single-stranded DNA from the far-upstream element (FUSE). May activate gene expression. Also involved in degradation of inherently unstable mRNAs that contain AU-rich elements (AREs) in their 3'-UTR, possibly by recruiting degradation machinery to ARE-containing mRNAs. The polypeptide is Far upstream element-binding protein 2 (KHSRP) (Homo sapiens (Human)).